Reading from the N-terminus, the 523-residue chain is Tyrosine/DOPA decarboxylase 5 (523 aa).

Polar residues predominate over residues 1–19 (MGSLPTDNLESMSICSQNP). 2 disordered regions span residues 1–20 (MGSL…QNPL) and 47–66 (SRSQ…APNH). At lysine 321 the chain carries N6-(pyridoxal phosphate)lysine.

The protein belongs to the group II decarboxylase family. In terms of assembly, homodimer. Pyridoxal 5'-phosphate is required as a cofactor. In terms of tissue distribution, roots.

It carries out the reaction L-tyrosine + H(+) = tyramine + CO2. The catalysed reaction is L-dopa + H(+) = dopamine + CO2. It catalyses the reaction 5-hydroxy-L-tryptophan + H(+) = serotonin + CO2. May play an important role in providing precursors for alkaloid synthesis in the roots and germinating seedlings. This chain is Tyrosine/DOPA decarboxylase 5 (TYDC5), found in Papaver somniferum (Opium poppy).